Reading from the N-terminus, the 396-residue chain is Elongation factor Tu (396 aa).

The 197-residue stretch at 10-206 folds into the tr-type G domain; the sequence is KPHCNIGTIG…QVDAYIPQPE (197 aa). Residues 19-26 form a G1 region; it reads GHVDHGKT. 19–26 is a GTP binding site; the sequence is GHVDHGKT. Mg(2+) is bound at residue Thr-26. Residues 60–64 are G2; that stretch reads GITIS. A G3 region spans residues 81–84; it reads DCPG. GTP-binding positions include 81–85 and 136–139; these read DCPGH and NKCD. The tract at residues 136 to 139 is G4; sequence NKCD. A G5 region spans residues 174–176; the sequence is SAL.

Belongs to the TRAFAC class translation factor GTPase superfamily. Classic translation factor GTPase family. EF-Tu/EF-1A subfamily. Monomer.

It localises to the cytoplasm. The enzyme catalyses GTP + H2O = GDP + phosphate + H(+). Functionally, GTP hydrolase that promotes the GTP-dependent binding of aminoacyl-tRNA to the A-site of ribosomes during protein biosynthesis. The protein is Elongation factor Tu of Rhodopseudomonas palustris (strain ATCC BAA-98 / CGA009).